The chain runs to 120 residues: Anti-adapter protein IraM (120 aa).

The protein belongs to the IraM/RssC family.

Its subcellular location is the cytoplasm. Functionally, involved in the stabilization of the sigma stress factor RpoS. The polypeptide is Anti-adapter protein IraM (Salmonella choleraesuis (strain SC-B67)).